We begin with the raw amino-acid sequence, 156 residues long: Small ribosomal subunit protein uS7 (156 aa).

This sequence belongs to the universal ribosomal protein uS7 family. Part of the 30S ribosomal subunit. Contacts proteins S9 and S11.

One of the primary rRNA binding proteins, it binds directly to 16S rRNA where it nucleates assembly of the head domain of the 30S subunit. Is located at the subunit interface close to the decoding center, probably blocks exit of the E-site tRNA. This chain is Small ribosomal subunit protein uS7, found in Shewanella woodyi (strain ATCC 51908 / MS32).